The chain runs to 191 residues: Probable protein-S-isoprenylcysteine O-methyltransferase (191 aa).

A run of 3 helical transmembrane segments spans residues tryptophan 8 to phenylalanine 28, tyrosine 45 to glutamate 65, and leucine 66 to isoleucine 86. S-adenosyl-L-methionine is bound by residues histidine 110 to isoleucine 113, tyrosine 118, and histidine 123 to tyrosine 126. A helical transmembrane segment spans residues phenylalanine 129–phenylalanine 149. Arginine 160 is a substrate binding site. Glutamate 164 is an S-adenosyl-L-methionine binding site.

The protein belongs to the class VI-like SAM-binding methyltransferase superfamily. Isoprenylcysteine carboxyl methyltransferase family. It depends on Zn(2+) as a cofactor.

It is found in the endoplasmic reticulum membrane. It catalyses the reaction [protein]-C-terminal S-[(2E,6E)-farnesyl]-L-cysteine + S-adenosyl-L-methionine = [protein]-C-terminal S-[(2E,6E)-farnesyl]-L-cysteine methyl ester + S-adenosyl-L-homocysteine. Catalyzes the post-translational methylation of isoprenylated C-terminal cysteine residues. Carboxyl methylation is a reversible and potentially regulated step in the post-translational modification of prenylated proteins. This is Probable protein-S-isoprenylcysteine O-methyltransferase (ICMT) from Oryza sativa subsp. indica (Rice).